We begin with the raw amino-acid sequence, 151 residues long: Spore coat polysaccharide biosynthesis protein SpsL (151 aa).

To dTDP-4-dehydrorhamnose reductase.

It functions in the pathway spore coat biogenesis; spore coat polysaccharide biosynthesis. The polypeptide is Spore coat polysaccharide biosynthesis protein SpsL (spsL) (Bacillus subtilis (strain 168)).